The chain runs to 264 residues: Small ribosomal subunit protein uS2 (264 aa).

The protein belongs to the universal ribosomal protein uS2 family.

The protein is Small ribosomal subunit protein uS2 of Helicobacter pylori (strain P12).